The chain runs to 151 residues: Globin (151 aa).

Positions 2 to 151 (SLSDADKKAL…AAFNETLKKA (150 aa)) constitute a Globin domain. Residue His-100 coordinates heme b.

The protein belongs to the globin family.

The protein is Globin of Biomphalaria glabrata (Bloodfluke planorb).